The sequence spans 149 residues: Ribonuclease pancreatic (149 aa).

The signal sequence occupies residues 1 to 25 (MGLEKSLILFPLFVLLLGWVQPSLG). A disordered region spans residues 30-49 (AQKFERQHMDSSGSSNNSPT). Substrate-binding residues include Lys-32 and Arg-35. The active-site Proton acceptor is His-37. Positions 39 to 49 (DSSGSSNNSPT) are enriched in polar residues. Disulfide bonds link Cys-51-Cys-109, Cys-65-Cys-120, Cys-83-Cys-135, and Cys-90-Cys-97. 66 to 70 (KPVNT) lines the substrate pocket. Residue Asn-87 is glycosylated (N-linked (GlcNAc...) asparagine). Position 91 (Lys-91) interacts with substrate. His-144 functions as the Proton donor in the catalytic mechanism.

This sequence belongs to the pancreatic ribonuclease family. As to quaternary structure, monomer. Interacts with and forms tight 1:1 complexes with RNH1. Dimerization of two such complexes may occur. Interaction with RNH1 inhibits this protein. Pancreas.

The protein localises to the secreted. The enzyme catalyses an [RNA] containing cytidine + H2O = an [RNA]-3'-cytidine-3'-phosphate + a 5'-hydroxy-ribonucleotide-3'-[RNA].. The catalysed reaction is an [RNA] containing uridine + H2O = an [RNA]-3'-uridine-3'-phosphate + a 5'-hydroxy-ribonucleotide-3'-[RNA].. Its function is as follows. Endonuclease that catalyzes the cleavage of RNA on the 3' side of pyrimidine nucleotides. Acts on single-stranded and double-stranded RNA. This is Ribonuclease pancreatic (Rnase1) from Mus pahari (Gairdner's shrew-mouse).